A 311-amino-acid chain; its full sequence is MKKLKVAIVGSGNIGTDLMIKILRHGQHLEMGALVGIDPDSDGLARAARLGVATTAEGVEGLARLPGFGEIDFVFDATSAAAHVKNDPFLRGLRPGLRLIDLTPAAVGPYCVPVVNLEQNLREPNVNMVTCGGQATIPMVAAVSRVARVHYAEIVASIASRSAGPGTRANIDEFTETTSKAIEAIGGARKGKAIIVLNPAEPPLIMRDTVYVLSAPADQARVEASLAEMAQAVQGYVPGYRLKQRVQFDEIPDAAPLNIPGLGRLSGLKTSVFLEVEGAAHYLPAYAGNLDIMTSAALATAERMAQSMLNA.

11 to 14 (SGNI) lines the NAD(+) pocket. Cysteine 131 functions as the Acyl-thioester intermediate in the catalytic mechanism. NAD(+)-binding positions include 162–170 (SAGPGTRAN) and asparagine 289.

The protein belongs to the acetaldehyde dehydrogenase family.

The catalysed reaction is acetaldehyde + NAD(+) + CoA = acetyl-CoA + NADH + H(+). This chain is Acetaldehyde dehydrogenase 2 (mhpF), found in Azotobacter vinelandii (strain DJ / ATCC BAA-1303).